We begin with the raw amino-acid sequence, 204 residues long: MTQEVAPPAAAQDDAHGTAEHIAEGVAAETAEHAKGGLPQLNPDTYPTQIFWLAVTFGLLLFLMSKVALPRVAEVLEARQEKIADDLDRAGALKAEADAVIENYERELAEARAKAQKVLSDATLAAESETTQRLGELAADLAERARAAEARIEQARRAALGNIRGVAAETAVAAAAKLAGLDLDPATAEAAVEEALNRVRQEVV.

The chain crosses the membrane as a helical span at residues 50 to 70 (IFWLAVTFGLLLFLMSKVALP).

It belongs to the ATPase B chain family. F-type ATPases have 2 components, F(1) - the catalytic core - and F(0) - the membrane proton channel. F(1) has five subunits: alpha(3), beta(3), gamma(1), delta(1), epsilon(1). F(0) has three main subunits: a(1), b(2) and c(10-14). The alpha and beta chains form an alternating ring which encloses part of the gamma chain. F(1) is attached to F(0) by a central stalk formed by the gamma and epsilon chains, while a peripheral stalk is formed by the delta and b chains.

It is found in the cell inner membrane. F(1)F(0) ATP synthase produces ATP from ADP in the presence of a proton or sodium gradient. F-type ATPases consist of two structural domains, F(1) containing the extramembraneous catalytic core and F(0) containing the membrane proton channel, linked together by a central stalk and a peripheral stalk. During catalysis, ATP synthesis in the catalytic domain of F(1) is coupled via a rotary mechanism of the central stalk subunits to proton translocation. Its function is as follows. Component of the F(0) channel, it forms part of the peripheral stalk, linking F(1) to F(0). The b'-subunit is a diverged and duplicated form of b found in plants and photosynthetic bacteria. The sequence is that of ATP synthase subunit b 2 (atpF2) from Rhodospirillum centenum (strain ATCC 51521 / SW).